A 546-amino-acid chain; its full sequence is Chaperonin GroEL (546 aa).

Residues 30-33 (TLGP), K51, 87-91 (DGTTT), G415, and D497 each bind ATP. The disordered stretch occupies residues 527 to 546 (PKKDSPAPAMPGGGMGGMDF). The span at 537-546 (PGGGMGGMDF) shows a compositional bias: gly residues.

The protein belongs to the chaperonin (HSP60) family. Forms a cylinder of 14 subunits composed of two heptameric rings stacked back-to-back. Interacts with the co-chaperonin GroES.

The protein localises to the cytoplasm. It catalyses the reaction ATP + H2O + a folded polypeptide = ADP + phosphate + an unfolded polypeptide.. Its function is as follows. Together with its co-chaperonin GroES, plays an essential role in assisting protein folding. The GroEL-GroES system forms a nano-cage that allows encapsulation of the non-native substrate proteins and provides a physical environment optimized to promote and accelerate protein folding. This Methylorubrum populi (strain ATCC BAA-705 / NCIMB 13946 / BJ001) (Methylobacterium populi) protein is Chaperonin GroEL.